We begin with the raw amino-acid sequence, 321 residues long: Isoaspartyl peptidase (321 aa).

T179 functions as the Nucleophile in the catalytic mechanism. Substrate is bound by residues 207–210 (RVGD) and 230–233 (TGTG).

The protein belongs to the Ntn-hydrolase family. In terms of assembly, heterotetramer of two alpha and two beta chains arranged as a dimer of alpha/beta heterodimers. Autocleaved. Generates the alpha and beta subunits. The N-terminal residue of the beta subunit is thought to be responsible for the nucleophile hydrolase activity. In terms of processing, both subunits undergo further processing at their C-termini. The overexpressed alpha subunit seems to consist of residues 2-161, with an oxidized Met residue and a tightly coordinated Na(+), whereas the overexpressed beta subunit is processed to residue 315 and has 3 oxidized Met residues. Processing of the alpha subunit is inhibited by Zn(2+).

It carries out the reaction Cleavage of a beta-linked Asp residue from the N-terminus of a polypeptide.. In terms of biological role, degrades proteins damaged by L-isoaspartyl residue formation (also known as beta-Asp residues). Degrades L-isoaspartyl-containing di- and maybe also tripeptides. Also has L-asparaginase activity, although this may not be its principal function. Its function is as follows. May be involved in glutathione, and possibly other peptide, transport, although these results could also be due to polar effects of disruption. The protein is Isoaspartyl peptidase (iaaA) of Escherichia coli (strain K12).